We begin with the raw amino-acid sequence, 305 residues long: Carbamate kinase (305 aa).

This sequence belongs to the carbamate kinase family.

The protein resides in the cytoplasm. It catalyses the reaction hydrogencarbonate + NH4(+) + ATP = carbamoyl phosphate + ADP + H2O + H(+). It functions in the pathway metabolic intermediate metabolism; carbamoyl phosphate degradation; CO(2) and NH(3) from carbamoyl phosphate: step 1/1. The polypeptide is Carbamate kinase (arcC) (Thermoplasma acidophilum (strain ATCC 25905 / DSM 1728 / JCM 9062 / NBRC 15155 / AMRC-C165)).